A 266-amino-acid polypeptide reads, in one-letter code: Killer cell lectin-like receptor 5 (266 aa).

The Cytoplasmic segment spans residues 1–44 (MSEPEVTYSTVRLHKSSGLQRLVSHEEIQGPGEAGYRKCSVPWQ). Residues 45–66 (LTVRSLGIFCFLLLVTVAVLAV) form a helical; Signal-anchor for type II membrane protein membrane-spanning segment. Residues 67–266 (KIFQYSQHKQ…CGKKLDHFPG (200 aa)) lie on the Extracellular side of the membrane. N-linked (GlcNAc...) asparagine glycans are attached at residues Asn87 and Asn104. The 119-residue stretch at 143–261 (GVKHWFCYGT…SYFCICGKKL (119 aa)) folds into the C-type lectin domain. Intrachain disulfides connect Cys149-Cys154, Cys167-Cys255, Cys171-Cys257, and Cys236-Cys249. An N-linked (GlcNAc...) asparagine glycan is attached at Asn250.

As to quaternary structure, homodimer; disulfide-linked. In terms of tissue distribution, mostly expressed in NK cells, but also observed on NK T and memory T-cells.

Its subcellular location is the membrane. Receptor on natural killer (NK) cells for class I MHC. The protein is Killer cell lectin-like receptor 5 (Klra5) of Mus musculus (Mouse).